We begin with the raw amino-acid sequence, 149 residues long: Large ribosomal subunit protein uL13 (149 aa).

It belongs to the universal ribosomal protein uL13 family. As to quaternary structure, part of the 50S ribosomal subunit.

This protein is one of the early assembly proteins of the 50S ribosomal subunit, although it is not seen to bind rRNA by itself. It is important during the early stages of 50S assembly. The sequence is that of Large ribosomal subunit protein uL13 from Borrelia turicatae (strain 91E135).